A 232-amino-acid chain; its full sequence is dTTP/UTP pyrophosphatase (232 aa).

Aspartate 103 serves as the catalytic Proton acceptor.

The protein belongs to the Maf family. YhdE subfamily. A divalent metal cation is required as a cofactor.

The protein resides in the cytoplasm. It carries out the reaction dTTP + H2O = dTMP + diphosphate + H(+). It catalyses the reaction UTP + H2O = UMP + diphosphate + H(+). The enzyme catalyses 5-methyl-UTP + H2O = 5-methyl-UMP + diphosphate + H(+). The catalysed reaction is psi-UTP + H2O = psi-UMP + diphosphate + H(+). Nucleoside triphosphate pyrophosphatase that hydrolyzes dTTP and UTP. Can also hydrolyze the modified nucleotides 5-methyl-UTP (m(5)UTP) and pseudo-UTP. Has weak activity with CTP. May have a dual role in cell division arrest and in preventing the incorporation of modified nucleotides into cellular nucleic acids. The sequence is that of dTTP/UTP pyrophosphatase from Saccharomyces cerevisiae (strain ATCC 204508 / S288c) (Baker's yeast).